Reading from the N-terminus, the 779-residue chain is Probable ATP-dependent RNA helicase DHX40 (779 aa).

The tract at residues 1–28 (MSRFPAVAGRAPRRQEEGERSRDLQEER) is disordered. Basic and acidic residues predominate over residues 13–28 (RRQEEGERSRDLQEER). One can recognise a Helicase ATP-binding domain in the interval 63–231 (IQAVRDNSFL…FGNCPIFDIP (169 aa)). 76-83 (GNTGSGKT) provides a ligand contact to ATP. The DEAH box motif lies at 173 to 176 (DEAH). The region spanning 263 to 442 (TMDIHLNEMA…SVVLTLKCLA (180 aa)) is the Helicase C-terminal domain. The segment at 737 to 779 (SKDVLKKMQRRNDDKSISDARARFLERKQQRTQDHSDTRKETG) is disordered.

It belongs to the DEAD box helicase family. DEAH subfamily. Ubiquitously expressed.

It carries out the reaction ATP + H2O = ADP + phosphate + H(+). In terms of biological role, probable ATP-dependent RNA helicase. The sequence is that of Probable ATP-dependent RNA helicase DHX40 (DHX40) from Homo sapiens (Human).